The following is a 443-amino-acid chain: Chromosome partition protein MukF (443 aa).

The leucine-zipper stretch occupies residues 209 to 237; the sequence is LDETSGNLRELQDTLNAAGDKLQAQLLRI.

It belongs to the MukF family. In terms of assembly, interacts, and probably forms a ternary complex, with MukE and MukB via its C-terminal region. The complex formation is stimulated by calcium or magnesium. It is required for an interaction between MukE and MukB.

The protein localises to the cytoplasm. Its subcellular location is the nucleoid. In terms of biological role, involved in chromosome condensation, segregation and cell cycle progression. May participate in facilitating chromosome segregation by condensation DNA from both sides of a centrally located replisome during cell division. Not required for mini-F plasmid partitioning. Probably acts via its interaction with MukB and MukE. Overexpression results in anucleate cells. It has a calcium binding activity. This Actinobacillus pleuropneumoniae serotype 7 (strain AP76) protein is Chromosome partition protein MukF.